The chain runs to 452 residues: Elongation factor Tu, mitochondrial (452 aa).

The N-terminal 43 residues, 1–43 (MAAATLLRATPRFSGLCASPTPFLQGRLRPLKAPASPFLCRGL), are a transit peptide targeting the mitochondrion. The tr-type G domain maps to 55 to 251 (KPHVNVGTIG…AVDTYIPVPT (197 aa)). The tract at residues 64 to 71 (GHVDHGKT) is G1. Residues aspartate 67, glycine 69, lysine 70, threonine 71, and threonine 72 each contribute to the GTP site. Threonine 71 serves as a coordination point for Mg(2+). The residue at position 79 (lysine 79) is an N6-acetyllysine. N6-acetyllysine; alternate is present on lysine 88. Lysine 88 is modified (N6-succinyllysine; alternate). A G2 region spans residues 105–109 (GITIN). The tract at residues 126-129 (DCPG) is G3. GTP-binding residues include asparagine 181, aspartate 184, serine 219, alanine 220, and leucine 221. A G4 region spans residues 181 to 184 (NKAD). The G5 stretch occupies residues 219 to 221 (SAL). Residue lysine 234 is modified to N6-succinyllysine. At lysine 256 the chain carries N6-acetyllysine. Threonine 278 carries the post-translational modification Phosphothreonine. The residue at position 286 (lysine 286) is an N6-succinyllysine. Serine 312 is modified (phosphoserine). Lysine 361 and lysine 418 each carry N6-acetyllysine.

The protein belongs to the TRAFAC class translation factor GTPase superfamily. Classic translation factor GTPase family. EF-Tu/EF-1A subfamily. In terms of assembly, interacts with NLRX1. Interacts with ATG16L1.

Its subcellular location is the mitochondrion. The catalysed reaction is GTP + H2O = GDP + phosphate + H(+). In terms of biological role, GTP hydrolase that promotes the GTP-dependent binding of aminoacyl-tRNA to the A-site of ribosomes during protein biosynthesis. Also plays a role in the regulation of autophagy and innate immunity. Recruits ATG5-ATG12 and NLRX1 at mitochondria and serves as a checkpoint of the RIGI-MAVS pathway. In turn, inhibits RLR-mediated type I interferon while promoting autophagy. The polypeptide is Elongation factor Tu, mitochondrial (Tufm) (Mus musculus (Mouse)).